The following is a 369-amino-acid chain: MTKKVAVLPGDGVGTEVTKGAVAVLKAIGERFDHQFEFTYGLIGGAAIDEAGTPLPESTIETCKQADAVLLGSVGGPKWDRNPSHLRPEKGLLAIRKELDLYANLRPVTFYDSLADASPLKKEYIEGVDFIIVRELTGGLYFGKPSERRTEGNKETVVDTLFYKRTEIERIIRQAFDTAVNRRKKVTSVDKANVLESSRVWREVAEEVAKDYPDVELEHMLVDSAAMQLIRNPKYFDVVVTENMFGDILSDEASMLTGSLGMLPSASLTADGPSLYEPVHGSAPDIAGQNKANPIAAILSAAMLLRHSFGLEKEAAVIEQAVESVLHAGHRTADLADGNHYLGTDKMVEAITAVIANDSAISSIMTAYS.

Residue Gly-76–Glu-89 participates in NAD(+) binding. The substrate site is built by Arg-96, Arg-106, Arg-134, and Asp-223. The Mg(2+) site is built by Asp-223, Asp-247, and Asp-251. Gly-281–Asn-293 is an NAD(+) binding site.

The protein belongs to the isocitrate and isopropylmalate dehydrogenases family. LeuB type 1 subfamily. In terms of assembly, homodimer. Mg(2+) is required as a cofactor. It depends on Mn(2+) as a cofactor.

The protein localises to the cytoplasm. It carries out the reaction (2R,3S)-3-isopropylmalate + NAD(+) = 4-methyl-2-oxopentanoate + CO2 + NADH. Its pathway is amino-acid biosynthesis; L-leucine biosynthesis; L-leucine from 3-methyl-2-oxobutanoate: step 3/4. Catalyzes the oxidation of 3-carboxy-2-hydroxy-4-methylpentanoate (3-isopropylmalate) to 3-carboxy-4-methyl-2-oxopentanoate. The product decarboxylates to 4-methyl-2 oxopentanoate. In Priestia megaterium (strain DSM 319 / IMG 1521) (Bacillus megaterium), this protein is 3-isopropylmalate dehydrogenase (leuB).